A 159-amino-acid polypeptide reads, in one-letter code: 2-C-methyl-D-erythritol 2,4-cyclodiphosphate synthase (159 aa).

Residues D10 and H12 each contribute to the a divalent metal cation site. Residues 10–12 and 36–37 each bind 4-CDP-2-C-methyl-D-erythritol 2-phosphate; these read DVH and HS. H44 contacts a divalent metal cation. 4-CDP-2-C-methyl-D-erythritol 2-phosphate-binding positions include 58 to 60, 134 to 137, F141, and R144; these read DIG and TTTE.

It belongs to the IspF family. As to quaternary structure, homotrimer. Requires a divalent metal cation as cofactor.

It carries out the reaction 4-CDP-2-C-methyl-D-erythritol 2-phosphate = 2-C-methyl-D-erythritol 2,4-cyclic diphosphate + CMP. It functions in the pathway isoprenoid biosynthesis; isopentenyl diphosphate biosynthesis via DXP pathway; isopentenyl diphosphate from 1-deoxy-D-xylulose 5-phosphate: step 4/6. Its function is as follows. Involved in the biosynthesis of isopentenyl diphosphate (IPP) and dimethylallyl diphosphate (DMAPP), two major building blocks of isoprenoid compounds. Catalyzes the conversion of 4-diphosphocytidyl-2-C-methyl-D-erythritol 2-phosphate (CDP-ME2P) to 2-C-methyl-D-erythritol 2,4-cyclodiphosphate (ME-CPP) with a corresponding release of cytidine 5-monophosphate (CMP). This chain is 2-C-methyl-D-erythritol 2,4-cyclodiphosphate synthase, found in Bacteroides fragilis (strain YCH46).